The following is a 178-amino-acid chain: Cytochrome b6-f complex iron-sulfur subunit (178 aa).

Residues 20–42 (LLTFGTATGVALGALYPVANYFM) traverse the membrane as a helical segment. One can recognise a Rieske domain in the interval 65 to 161 (KTGWLATHQA…VDIEDDAVLV (97 aa)). 4 residues coordinate [2Fe-2S] cluster: C107, H109, C125, and H128. C112 and C127 are joined by a disulfide.

The protein belongs to the Rieske iron-sulfur protein family. In terms of assembly, the 4 large subunits of the cytochrome b6-f complex are cytochrome b6, subunit IV (17 kDa polypeptide, PetD), cytochrome f and the Rieske protein, while the 4 small subunits are PetG, PetL, PetM and PetN. The complex functions as a dimer. Requires [2Fe-2S] cluster as cofactor.

The protein resides in the cellular thylakoid membrane. The enzyme catalyses 2 oxidized [plastocyanin] + a plastoquinol + 2 H(+)(in) = 2 reduced [plastocyanin] + a plastoquinone + 4 H(+)(out). Its function is as follows. Component of the cytochrome b6-f complex, which mediates electron transfer between photosystem II (PSII) and photosystem I (PSI), cyclic electron flow around PSI, and state transitions. The sequence is that of Cytochrome b6-f complex iron-sulfur subunit from Prochlorococcus marinus (strain MIT 9301).